The sequence spans 739 residues: Trehalose phosphorylase (739 aa).

A propeptide spanning residues 1-26 (MSTPHHQFESKSSTAIRRRLSSSVSS) is cleaved from the precursor. The segment at 1 to 28 (MSTPHHQFESKSSTAIRRRLSSSVSSKQ) is disordered.

The protein belongs to the glycosyltransferase group 1 family. Glycosyltransferase 4 subfamily. As to quaternary structure, homodimer.

The catalysed reaction is alpha,alpha-trehalose + phosphate = alpha-D-glucose + alpha-D-glucose 1-phosphate. Functionally, reversibly catalyzes the synthesis and degradation of trehalose from glucose and alpha-D-glucose 1-phosphate. The equilibrium lies in the direction of trehalose synthesis. The sequence is that of Trehalose phosphorylase from Pleurotus pulmonarius (Indian oyster mushroom).